The sequence spans 333 residues: Malate dehydrogenase (333 aa).

NAD(+) contacts are provided by residues 10 to 15 and Asp34; that span reads GGGQIG. Substrate is bound by residues Arg83 and Arg89. NAD(+)-binding positions include Asn96 and 119–121; that span reads ITN. Substrate-binding residues include Asn121 and Arg152. Residue His176 is the Proton acceptor of the active site.

It belongs to the LDH/MDH superfamily. MDH type 3 family.

It carries out the reaction (S)-malate + NAD(+) = oxaloacetate + NADH + H(+). Functionally, catalyzes the reversible oxidation of malate to oxaloacetate. The protein is Malate dehydrogenase of Parvibaculum lavamentivorans (strain DS-1 / DSM 13023 / NCIMB 13966).